Consider the following 300-residue polypeptide: Ubiquinone biosynthesis protein COQ4, mitochondrial (300 aa).

Zn(2+) contacts are provided by histidine 173, aspartate 174, histidine 177, and glutamate 189.

The protein belongs to the COQ4 family. In terms of assembly, component of a multi-subunit COQ enzyme complex, composed of at least COQ3, COQ4, COQ5, COQ6, COQ7 and COQ9. The cofactor is Zn(2+).

The protein localises to the mitochondrion inner membrane. The enzyme catalyses a 4-hydroxy-3-methoxy-5-(all-trans-polyprenyl)benzoate + H(+) = a 2-methoxy-6-(all-trans-polyprenyl)phenol + CO2. It functions in the pathway cofactor biosynthesis; ubiquinone biosynthesis. Lyase that catalyzes the C1-decarboxylation of 4-hydroxy-3-methoxy-5-(all-trans-polyprenyl)benzoic acid into 2-methoxy-6-(all-trans-polyprenyl)phenol during ubiquinone biosynthesis. The sequence is that of Ubiquinone biosynthesis protein COQ4, mitochondrial from Cryptococcus neoformans var. neoformans serotype D (strain B-3501A) (Filobasidiella neoformans).